The chain runs to 245 residues: Biosynthetic peptidoglycan transglycosylase (245 aa).

A helical transmembrane segment spans residues 29–49 (LLVAFLILSLVLVATVSVINP).

The protein belongs to the glycosyltransferase 51 family.

The protein resides in the cell inner membrane. It carries out the reaction [GlcNAc-(1-&gt;4)-Mur2Ac(oyl-L-Ala-gamma-D-Glu-L-Lys-D-Ala-D-Ala)](n)-di-trans,octa-cis-undecaprenyl diphosphate + beta-D-GlcNAc-(1-&gt;4)-Mur2Ac(oyl-L-Ala-gamma-D-Glu-L-Lys-D-Ala-D-Ala)-di-trans,octa-cis-undecaprenyl diphosphate = [GlcNAc-(1-&gt;4)-Mur2Ac(oyl-L-Ala-gamma-D-Glu-L-Lys-D-Ala-D-Ala)](n+1)-di-trans,octa-cis-undecaprenyl diphosphate + di-trans,octa-cis-undecaprenyl diphosphate + H(+). It participates in cell wall biogenesis; peptidoglycan biosynthesis. In terms of biological role, peptidoglycan polymerase that catalyzes glycan chain elongation from lipid-linked precursors. In Shewanella amazonensis (strain ATCC BAA-1098 / SB2B), this protein is Biosynthetic peptidoglycan transglycosylase.